We begin with the raw amino-acid sequence, 1273 residues long: Probable methionine synthase (1273 aa).

Residues 7 to 327 form the Hcy-binding domain; the sequence is FKELADIAKE…DHINAMYKAV (321 aa). Positions 249, 312, and 313 each coordinate Zn(2+). Residues 360-621 enclose the Pterin-binding domain; it reads FVNIGERCNV…IDKPLLQLLE (262 aa). The region spanning 652-749 is the B12-binding N-terminal domain; it reads KTDEWRNTSV…FMDAERQANI (98 aa). Methylcob(III)alamin-binding positions include glutamate 699, 772 to 776, histidine 775, serine 820, threonine 824, and alanine 876; that span reads GDVHD. A B12-binding domain is found at 762 to 897; the sequence is QGTVVIATVK…DMTVRDAFLQ (136 aa). The AdoMet activation domain occupies 927-1273; the sequence is SLKDRRFVAL…LSPIIGYELD (347 aa). S-adenosyl-L-methionine-binding positions include aspartate 977, arginine 1171, and 1225-1226; that span reads YF.

Belongs to the vitamin-B12 dependent methionine synthase family. Methylcob(III)alamin serves as cofactor. It depends on Zn(2+) as a cofactor.

The catalysed reaction is (6S)-5-methyl-5,6,7,8-tetrahydrofolate + L-homocysteine = (6S)-5,6,7,8-tetrahydrofolate + L-methionine. It functions in the pathway amino-acid biosynthesis; L-methionine biosynthesis via de novo pathway; L-methionine from L-homocysteine (MetH route): step 1/1. In terms of biological role, catalyzes the transfer of a methyl group from methyl-cobalamin to homocysteine, yielding enzyme-bound cob(I)alamin and methionine. Subsequently, remethylates the cofactor using methyltetrahydrofolate. The chain is Probable methionine synthase (metr-1) from Caenorhabditis briggsae.